We begin with the raw amino-acid sequence, 212 residues long: Adenylate kinase (212 aa).

10 to 15 contacts ATP; that stretch reads GAGKGT. Residues 30-59 are NMP; sequence AIGDIFRTIIKTSTSEAELINNYVRQGELI. AMP is bound by residues Arg-36, 57–59, 85–88, and Gln-92; these read ELI and GYPR. The LID stretch occupies residues 122–160; it reads GRYSCKNCGKIYNRYFLQPKTDNVCDVCGSSTFDYRKDD. Arg-123 contributes to the ATP binding site. Residues Cys-126 and Cys-129 each contribute to the Zn(2+) site. 132–133 contributes to the ATP binding site; the sequence is IY. Residues Cys-146 and Cys-149 each coordinate Zn(2+). Positions 157 and 168 each coordinate AMP. Lys-196 is a binding site for ATP.

It belongs to the adenylate kinase family. As to quaternary structure, monomer.

It is found in the cytoplasm. It carries out the reaction AMP + ATP = 2 ADP. The protein operates within purine metabolism; AMP biosynthesis via salvage pathway; AMP from ADP: step 1/1. In terms of biological role, catalyzes the reversible transfer of the terminal phosphate group between ATP and AMP. Plays an important role in cellular energy homeostasis and in adenine nucleotide metabolism. This Rickettsia peacockii (strain Rustic) protein is Adenylate kinase.